The chain runs to 431 residues: UDP-N-acetylmuramate--L-alanine ligase (431 aa).

108–114 serves as a coordination point for ATP; the sequence is GAHGKST.

Belongs to the MurCDEF family.

It localises to the cytoplasm. The enzyme catalyses UDP-N-acetyl-alpha-D-muramate + L-alanine + ATP = UDP-N-acetyl-alpha-D-muramoyl-L-alanine + ADP + phosphate + H(+). It participates in cell wall biogenesis; peptidoglycan biosynthesis. Cell wall formation. The protein is UDP-N-acetylmuramate--L-alanine ligase of Campylobacter jejuni subsp. doylei (strain ATCC BAA-1458 / RM4099 / 269.97).